Consider the following 378-residue polypeptide: Transcription factor YY2 (378 aa).

The tract at residues 39 to 113 (LETSVGQTIE…DNLLFSPEFG (75 aa)) is mediates transcriptional activation. The mediates transcriptional repression stretch occupies residues 243–378 (EFTSMRPKKP…LTHVKNKNDQ (136 aa)). 4 C2H2-type zinc fingers span residues 260-284 (IACS…LHIH), 289-311 (HVCA…QLVH), 317-341 (YQCT…VRIH), and 347-371 (FVCP…ILTH).

This sequence belongs to the YY transcription factor family. As to expression, weakly expressed by neuronal and glial cells in the cerebral cortex. Expressed by Purkinje cells and in the granular layers of the cerebellum. Expressed in all layers of spermatocytes in testis but not detected in sperm cells.

Its subcellular location is the nucleus. Functionally, functions as a multifunctional transcription factor that may exhibit positive and negative control on a large number of genes. May antagonize YY1 and function in development and differentiation. The protein is Transcription factor YY2 (Yy2) of Mus musculus (Mouse).